We begin with the raw amino-acid sequence, 523 residues long: MSQSVLIVDALGAGKGWRTRSRDVIGAGPRTVASLLESDYEVSLITYEDLQKLGLDSVMDYDTVGVSIMTGDERAARRMFDHTRSRTFRFIGGPGAADPNALLKTGADAAVIGEAEETLPELLEERGPVRGVYFRRGTEVDFPGPRPISRRFTRVNPEYIRAYAHRWAARVYVEIVRGCSNSCRTTFELPDGRKCSGCGNCREGEGGERWECPEGIPPGCGFCSVPSIFGPTRSRPLNEVVREVRGLVREGIRRVVLSASDVLDYGRGDLLTDPRTPPPNVEALRRLLRRTSKHVDVLFVENVKACLLNREIAELLGEYCRGTSVSVGVETGDPRLLRAIGKPSTLKEALRAIRLLRRAGLRPHAYFVYGLPGQTMKSAKLTAKAMKRAVEMGAEKITVYRFRPIPASAFGDFPPGPSPRNDEASRLIADTARRLNEALKRRMIGKRIRVYVAEPDLRRPRDAIGWPVKGGPKVRLKGARELVGTECEVEITGVVSDKVVSGKVVRILEEIDVEALEGRGVPG.

Residues 193-447 enclose the Radical SAM core domain; that stretch reads RKCSGCGNCR…ALKRRMIGKR (255 aa). The [4Fe-4S] cluster site is built by Cys-212, Cys-220, and Cys-223.

It depends on [4Fe-4S] cluster as a cofactor.

This is an uncharacterized protein from Methanopyrus kandleri (strain AV19 / DSM 6324 / JCM 9639 / NBRC 100938).